A 155-amino-acid polypeptide reads, in one-letter code: MATRNPPPQDYESDDDSYEVLDLTEYARRHQWWNRVFGHSSGPMVEKYSVATQIVMGGVTGWCAGFLFQKVGKLAATAVGGGFLLLQIASHSGYVQIDWKRVEKDVNKAKRQIKKRANKAAPEINNLIEEATEFIKQNIVISSGFVGGFLLGLAS.

The Cytoplasmic portion of the chain corresponds to 1-47 (MATRNPPPQDYESDDDSYEVLDLTEYARRHQWWNRVFGHSSGPMVEK). Ser13 carries the post-translational modification Phosphoserine; by CK2. Position 17 is a phosphoserine; by ULK1 (Ser17). Tyr18 is modified (phosphotyrosine; by SRC). Residues 18–21 (YEVL) carry the YXXL motif. The chain crosses the membrane as a helical span at residues 48 to 68 (YSVATQIVMGGVTGWCAGFLF). The Mitochondrial intermembrane portion of the chain corresponds to 69-74 (QKVGKL). A helical membrane pass occupies residues 75 to 95 (AATAVGGGFLLLQIASHSGYV). Residues 96-133 (QIDWKRVEKDVNKAKRQIKKRANKAAPEINNLIEEATE) are Cytoplasmic-facing. Lys119 is covalently cross-linked (Glycyl lysine isopeptide (Lys-Gly) (interchain with G-Cter in ubiquitin)). Residues 134–154 (FIKQNIVISSGFVGGFLLGLA) form a helical membrane-spanning segment. Residue Ser155 is a topological domain, mitochondrial intermembrane.

Belongs to the FUN14 family. In terms of assembly, interacts (via YXXL motif) with MAP1 LC3 family proteins MAP1LC3A, MAP1LC3B and GABARAP. Interacts with DNM1L/DPR1. Interacts with GPX4. In terms of processing, phosphorylation at Ser-13 by CK2 and at Tyr-18 by SRC inhibits activation of mitophagy. Following hypoxia, dephosphorylated at Tyr-18, leading to interaction with MAP1 LC3 family proteins and triggering mitophagy. Dephosphorylation is mediated by PGAM5. Phosphorylated by ULK1 at Ser-17 which enhances FUNDC1 binding to LC3. Ubiquitinated on Lys-119. Deubiquitinated by USP19; leading to hypoxia-induced DRP1 oligomerization and GTPase activity. In terms of tissue distribution, widely expressed.

It is found in the mitochondrion outer membrane. Integral mitochondrial outer-membrane protein that mediates the formation of mitochondria-associated endoplasmic reticulum membranes (MAMs). In turn, mediates angiogenesis and neoangiogenesis through interference with intracellular Ca(2+) communication and regulation of the vascular endothelial growth factor receptor KDR/VEGFR2 expression at both mRNA and protein levels. Also acts as an activator of hypoxia-induced mitophagy, an important mechanism for mitochondrial quality and homeostasis, by interacting with and recruiting LC3 protein family to mitochondria. Mechanistically, recruits DRP1 at ER-mitochondria contact sites leading to DRP1 oligomerization and GTPase activity to facilitate mitochondrial fission during hypoxia. Additionally, plays a role in hepatic ferroptosis by interacting directly with glutathione peroxidase/GPX4 to facilitate its recruitment into mitochondria through TOM/TIM complex where it is degraded by mitophagy. This chain is FUN14 domain-containing protein 1 (FUNDC1), found in Homo sapiens (Human).